The primary structure comprises 483 residues: GTPase Der (483 aa).

2 EngA-type G domains span residues 3-167 and 212-387; these read FTLA…GEER and LRIA…EIWN. Residues 9–16, 56–60, 119–122, 218–225, 265–269, and 330–333 each bind GTP; these read GRPNVGKS, DTAGL, NKAE, GRPNAGKS, DTAGM, and NKWD. The KH-like domain occupies 388-472; it reads RRISTGRLNR…PIRLSLRTSD (85 aa).

The protein belongs to the TRAFAC class TrmE-Era-EngA-EngB-Septin-like GTPase superfamily. EngA (Der) GTPase family. Associates with the 50S ribosomal subunit.

Its function is as follows. GTPase that plays an essential role in the late steps of ribosome biogenesis. The protein is GTPase Der of Brucella ovis (strain ATCC 25840 / 63/290 / NCTC 10512).